A 313-amino-acid polypeptide reads, in one-letter code: CBK1 kinase activator protein MOB2 (313 aa).

Positions 1–109 (MSFLNTIRGL…KRSSIQTTKS (109 aa)) are disordered. Polar residues predominate over residues 23-69 (PSNNAIYSHSNLSGNGLRRTQSPTKFSPSKLSSKGAQGSAAYTSSPT). Serine 44, serine 51, serine 67, and serine 97 each carry phosphoserine; by CDC28. Residues 76–97 (QSLQHQDSQSSLQYQQQSGSVS) are compositionally biased toward low complexity. A compositionally biased stretch (polar residues) spans 98–109 (PSKRSSIQTTKS).

It belongs to the MOB1/phocein family. In terms of assembly, interacts with protein kinase CBK1 to form the RAM CBK1-MOB2 kinase complex. In terms of processing, phosphorylated by CDC28 at Ser-44, Ser-51, Ser-67, and Ser-97. Phosphorylation occurs during bud emergence and is maintained until the G2/M transition. Dephosphorylated at the end of mitosis. Phosphorylation is required for the maintenance of polarisome components in hyphae.

The protein localises to the nucleus. Its subcellular location is the cytoplasm. In terms of biological role, functions as an activator subunit for the CBK1 protein kinase. Part of the regulation of ACE2 activity and cellular morphogenesis (RAM) signaling network. The RAM network is critically required for hyphal growth as well as normal vegetative growth, and for polarization of lipid rafts and the actin cytoskeleton. It play an essential role in biofilm formation. The RAM network also plays a role in serum- and antifungal azoles-induced activation of ergosterol biosynthesis genes, especially those involved in the late steps of ergosterol biosynthesis. This Candida albicans (strain SC5314 / ATCC MYA-2876) (Yeast) protein is CBK1 kinase activator protein MOB2 (MOB2).